A 344-amino-acid chain; its full sequence is Biotin synthase (344 aa).

The Radical SAM core domain occupies 40 to 267; sequence AEVQVSTLLS…KSMVRLSAGR (228 aa). [4Fe-4S] cluster contacts are provided by Cys55, Cys59, and Cys62. The [2Fe-2S] cluster site is built by Cys99, Cys130, Cys190, and Arg262.

The protein belongs to the radical SAM superfamily. Biotin synthase family. In terms of assembly, homodimer. The cofactor is [4Fe-4S] cluster. It depends on [2Fe-2S] cluster as a cofactor.

It catalyses the reaction (4R,5S)-dethiobiotin + (sulfur carrier)-SH + 2 reduced [2Fe-2S]-[ferredoxin] + 2 S-adenosyl-L-methionine = (sulfur carrier)-H + biotin + 2 5'-deoxyadenosine + 2 L-methionine + 2 oxidized [2Fe-2S]-[ferredoxin]. It participates in cofactor biosynthesis; biotin biosynthesis; biotin from 7,8-diaminononanoate: step 2/2. Catalyzes the conversion of dethiobiotin (DTB) to biotin by the insertion of a sulfur atom into dethiobiotin via a radical-based mechanism. This is Biotin synthase from Xanthomonas oryzae pv. oryzae (strain PXO99A).